The following is a 331-amino-acid chain: Decarboxylase orsB (331 aa).

The Zn(2+) site is built by His-11, His-157, and Asp-284.

It belongs to the metallo-dependent hydrolases superfamily. ACMSD family.

The protein operates within secondary metabolite biosynthesis. In terms of biological role, decarboxylase; part of the gene cluster that mediates the biosynthesis of orsellinic acid, as well as of the cathepsin K inhibitors F9775 A and F9775 B. The non-reducing polyketide synthase orsA produces orsellinic acid by condensing acetyl-CoA with 3 malonyl-CoA units. Further modifications by the decarboxylase orsB and the tyrosinase-like protein orsC lead to the production of F9775 A and F9775 B. The functions of orsD and orsE remain unclear since only orsB and orsC are required to convert orsellinic acid into F9775 A and F9775 B. The protein is Decarboxylase orsB of Emericella nidulans (strain FGSC A4 / ATCC 38163 / CBS 112.46 / NRRL 194 / M139) (Aspergillus nidulans).